A 348-amino-acid polypeptide reads, in one-letter code: Rhodopsin (348 aa).

The residue at position 1 (M1) is an N-acetylmethionine. The Extracellular segment spans residues 1 to 36 (MNGTEGPNFYVPFSNKTGVVRSPFEEPQYYLAEPWQ). N-linked (GlcNAc...) asparagine glycosylation is found at N2 and N15. The chain crosses the membrane as a helical span at residues 37 to 61 (FSCLAAYMFMLIVLGFPINFLTLYV). At 62-73 (TIQHKKLRTPLN) the chain is on the cytoplasmic side. Residues 74 to 96 (YILLNLAIADLFMVFGGFTTTLY) traverse the membrane as a helical segment. Residues 97-110 (TSLHGYFVFGPTGC) are Extracellular-facing. Residues C110 and C187 are joined by a disulfide bond. A helical transmembrane segment spans residues 111 to 133 (DLEGFFATLGGEIALWSLVVLAI). The 'Ionic lock' involved in activated form stabilization motif lies at 134 to 136 (ERY). Residues 134 to 152 (ERYIVVCKPMSNFRFGENH) lie on the Cytoplasmic side of the membrane. A helical membrane pass occupies residues 153–173 (AIMGVAFTWVMALACAAPPLV). Residues 174–202 (GWSRYIPEGMQCSCGIDYYTLKPEVNNES) lie on the Extracellular side of the membrane. E201 contacts Zn(2+). A helical transmembrane segment spans residues 203 to 224 (FVIYMFVVHFTIPMVVIFFCYG). Topologically, residues 225–252 (QLVFTVKEAAAQQQESATTQKAEKEVTR) are cytoplasmic. Residues 253–274 (MVIIMVIAFLICWLPYAGVAFY) traverse the membrane as a helical segment. Topologically, residues 275 to 286 (IFTHQGSNFGPI) are extracellular. Residue Q279 coordinates Zn(2+). A helical membrane pass occupies residues 287-308 (LMTLPAFFAKTSAVYNPVIYIM). K296 is modified (N6-(retinylidene)lysine). The Cytoplasmic portion of the chain corresponds to 309–348 (LNKQFRTCMLTTLCCGKIPLGDDEASATASKTETSQVAPA). 2 S-palmitoyl cysteine lipidation sites follow: C322 and C323. Residues 330-348 (DDEASATASKTETSQVAPA) are interaction with SAG. Residue S334 is modified to Phosphoserine. A Phosphothreonine modification is found at T336. Phosphoserine is present on S338. Phosphothreonine occurs at positions 340 and 342. S343 is subject to Phosphoserine.

It belongs to the G-protein coupled receptor 1 family. Opsin subfamily. Homodimer. May form a complex composed of RHO, GRK1 and RCVRN in a Ca(2+)-dependent manner; RCVRN prevents the interaction between GRK1 and RHO. Interacts with GRK1. Interacts (phosphorylated form) with SAG. Interacts with GNAT1. Interacts with GNAT3. SAG and G-proteins compete for a common binding site. Interacts with PRCD; the interaction promotes PRCD stability. Forms a complex with ASAP1 and ARF4. Forms a complex with ASAP1, RAB11A, Rabin8/RAB3IP, ARF4 and RAB11FIP3; the complex regulates Golgi-to-cilia rhodopsin/RHO transport in photoreceptors. In terms of processing, phosphorylated on some or all of the serine and threonine residues present in the C-terminal region. Post-translationally, contains one covalently linked retinal chromophore. Upon light absorption, the covalently bound 11-cis-retinal is converted to all-trans-retinal. After hydrolysis of the Schiff base and release of the covalently bound all-trans-retinal, active rhodopsin is regenerated by binding of a fresh molecule of 11-cis-retinal.

Its subcellular location is the membrane. The protein resides in the cell projection. The protein localises to the cilium. It localises to the photoreceptor outer segment. Its function is as follows. Photoreceptor required for image-forming vision at low light intensity. Required for photoreceptor cell viability after birth. Light-induced isomerization of 11-cis to all-trans retinal triggers a conformational change that activates signaling via G-proteins. Subsequent receptor phosphorylation mediates displacement of the bound G-protein alpha subunit by the arrestin SAG and terminates signaling. The chain is Rhodopsin (RHO) from Caluromys philander (Bare-tailed woolly opossum).